The primary structure comprises 272 residues: Putative phosphoenolpyruvate synthase regulatory protein (272 aa).

An ADP-binding site is contributed by 152 to 159 (GVSRCGKT).

The protein belongs to the pyruvate, phosphate/water dikinase regulatory protein family. PSRP subfamily.

The enzyme catalyses [pyruvate, water dikinase] + ADP = [pyruvate, water dikinase]-phosphate + AMP + H(+). The catalysed reaction is [pyruvate, water dikinase]-phosphate + phosphate + H(+) = [pyruvate, water dikinase] + diphosphate. Functionally, bifunctional serine/threonine kinase and phosphorylase involved in the regulation of the phosphoenolpyruvate synthase (PEPS) by catalyzing its phosphorylation/dephosphorylation. The chain is Putative phosphoenolpyruvate synthase regulatory protein from Pseudomonas putida (strain ATCC 700007 / DSM 6899 / JCM 31910 / BCRC 17059 / LMG 24140 / F1).